The sequence spans 376 residues: Glutamate 5-kinase (376 aa).

K16 serves as a coordination point for ATP. The substrate site is built by S56, D143, and N155. 175–176 (TD) is an ATP binding site. One can recognise a PUA domain in the interval 283–361 (RGALSLDEGA…RDIETTLGYV (79 aa)).

Belongs to the glutamate 5-kinase family.

The protein localises to the cytoplasm. The catalysed reaction is L-glutamate + ATP = L-glutamyl 5-phosphate + ADP. Its pathway is amino-acid biosynthesis; L-proline biosynthesis; L-glutamate 5-semialdehyde from L-glutamate: step 1/2. In terms of biological role, catalyzes the transfer of a phosphate group to glutamate to form L-glutamate 5-phosphate. In Halorhodospira halophila (strain DSM 244 / SL1) (Ectothiorhodospira halophila (strain DSM 244 / SL1)), this protein is Glutamate 5-kinase.